The chain runs to 300 residues: ATP synthase gamma chain (300 aa).

This sequence belongs to the ATPase gamma chain family. In terms of assembly, F-type ATPases have 2 components, CF(1) - the catalytic core - and CF(0) - the membrane proton channel. CF(1) has five subunits: alpha(3), beta(3), gamma(1), delta(1), epsilon(1). CF(0) has three main subunits: a, b and c.

It is found in the cell membrane. Its function is as follows. Produces ATP from ADP in the presence of a proton gradient across the membrane. The gamma chain is believed to be important in regulating ATPase activity and the flow of protons through the CF(0) complex. This is ATP synthase gamma chain from Acidothermus cellulolyticus (strain ATCC 43068 / DSM 8971 / 11B).